Here is a 293-residue protein sequence, read N- to C-terminus: 33 kDa chaperonin (293 aa).

2 disulfides stabilise this stretch: Cys237–Cys239 and Cys271–Cys274.

The protein belongs to the HSP33 family. Under oxidizing conditions two disulfide bonds are formed involving the reactive cysteines. Under reducing conditions zinc is bound to the reactive cysteines and the protein is inactive.

The protein localises to the cytoplasm. In terms of biological role, redox regulated molecular chaperone. Protects both thermally unfolding and oxidatively damaged proteins from irreversible aggregation. Plays an important role in the bacterial defense system toward oxidative stress. The polypeptide is 33 kDa chaperonin (Haemophilus influenzae (strain PittGG)).